A 436-amino-acid polypeptide reads, in one-letter code: Trigger factor (436 aa).

The 86-residue stretch at 161-246 (GDQVNIDFVG…VNSVAAPQLP (86 aa)) folds into the PPIase FKBP-type domain.

The protein belongs to the FKBP-type PPIase family. Tig subfamily.

Its subcellular location is the cytoplasm. The catalysed reaction is [protein]-peptidylproline (omega=180) = [protein]-peptidylproline (omega=0). Functionally, involved in protein export. Acts as a chaperone by maintaining the newly synthesized protein in an open conformation. Functions as a peptidyl-prolyl cis-trans isomerase. The sequence is that of Trigger factor from Stutzerimonas stutzeri (strain A1501) (Pseudomonas stutzeri).